The chain runs to 573 residues: BICD family-like cargo adapter 1 (573 aa).

Residues 67–97 are disordered; that stretch reads ERPSDPGEHPQAEPGSLAEGAGPQPPPSQDP. Residues 68-77 are compositionally biased toward basic and acidic residues; the sequence is RPSDPGEHPQ. A CC1 box motif is present at residues 113 to 117; it reads AARLG. A coiled-coil region spans residues 118-376; that stretch reads KALLERNQDM…QLWEAYCQVR (259 aa). The interval 386–412 is disordered; sequence DSADSAVSTDSSMDESSETSSAKDVPA. The segment covering 387-396 has biased composition (low complexity); that stretch reads SADSAVSTDS. Positions 440-525 form a coiled coil; that stretch reads LSVEMTALKE…LEAWQDDMHR (86 aa).

This sequence belongs to the BICDR family. In terms of assembly, part of a tripartite complex with dynein and dynactin, acts an adapter linking the dynein motor complex and dynactin. Interacts with KIF1C. Interacts with RAB6A and RAB6B; interaction is specific to Rab6.

Its subcellular location is the cytoplasm. It is found in the cytoskeleton. It localises to the microtubule organizing center. The protein resides in the centrosome. Acts as an adapter protein linking the dynein motor complex to various cargos and converts dynein from a non-processive to a highly processive motor in the presence of dynactin. Facilitates the interaction between dynein and dynactin and activates dynein processivity (the ability to move along a microtubule for a long distance without falling off the track). Predominantly recruits 2 dyneins, which increases both the force and speed of the microtubule motor. Component of secretory vesicle machinery in developing neurons that acts as a regulator of neurite outgrowth. Regulates the secretory vesicle transport by controlling the accumulation of Rab6-containing secretory vesicles in the pericentrosomal region restricting anterograde secretory transport during the early phase of neuronal differentiation, thereby inhibiting neuritogenesis. The sequence is that of BICD family-like cargo adapter 1 (BICDL1) from Homo sapiens (Human).